A 284-amino-acid polypeptide reads, in one-letter code: Bifunctional protein FolD (284 aa).

NADP(+) is bound by residues 166–168 (GAS) and Ile232.

The protein belongs to the tetrahydrofolate dehydrogenase/cyclohydrolase family. In terms of assembly, homodimer.

It catalyses the reaction (6R)-5,10-methylene-5,6,7,8-tetrahydrofolate + NADP(+) = (6R)-5,10-methenyltetrahydrofolate + NADPH. The catalysed reaction is (6R)-5,10-methenyltetrahydrofolate + H2O = (6R)-10-formyltetrahydrofolate + H(+). Its pathway is one-carbon metabolism; tetrahydrofolate interconversion. Functionally, catalyzes the oxidation of 5,10-methylenetetrahydrofolate to 5,10-methenyltetrahydrofolate and then the hydrolysis of 5,10-methenyltetrahydrofolate to 10-formyltetrahydrofolate. In Shewanella amazonensis (strain ATCC BAA-1098 / SB2B), this protein is Bifunctional protein FolD.